Reading from the N-terminus, the 417-residue chain is Cobalamin binding intrinsic factor (417 aa).

Residues 1–18 (MAWLSFYLLNVLWAVAGT) form the signal peptide. 3 disulfide bridges follow: C26-C246, C103-C288, and C143-C182. Residue D171 coordinates cob(II)alamin. S191 carries the post-translational modification Phosphoserine. An N-linked (GlcNAc...) asparagine glycan is attached at N209. Residues D222 and Q270 each contribute to the cob(II)alamin site. Residues N311 and N330 are each glycosylated (N-linked (GlcNAc...) asparagine). Cob(II)alamin-binding positions include 365-370 (SWGLIV) and 386-395 (WEFLSGKTPL). The N-linked (GlcNAc...) asparagine glycan is linked to N413.

It belongs to the eukaryotic cobalamin transport proteins family. Interacts with CUBN (via CUB domains). The N-terminus is blocked. Gastric mucosa.

It is found in the secreted. In terms of biological role, promotes absorption of the essential vitamin cobalamin (Cbl) in the ileum. After interaction with CUBN, the CBLIF-cobalamin complex is internalized via receptor-mediated endocytosis. In Rattus norvegicus (Rat), this protein is Cobalamin binding intrinsic factor.